The sequence spans 198 residues: Syndecan-4 (198 aa).

The signal sequence occupies residues 1–18; it reads MAPARLFALLLFFVGGVA. The Extracellular segment spans residues 19–145; sequence ESIRETEVID…QGSNIFERTE (127 aa). O-linked (Xyl...) (glycosaminoglycan) serine glycans are attached at residues serine 39, serine 61, and serine 63. Serine 95 carries an O-linked (Xyl...) (chondroitin sulfate) serine glycan. Residues 146 to 170 form a helical membrane-spanning segment; sequence VLAALIVGGIVGILFAVFLILLLMY. The Cytoplasmic portion of the chain corresponds to 171 to 198; sequence RMKKKDEGSYDLGKKPIYKKAPTNEFYA.

The protein belongs to the syndecan proteoglycan family. As to quaternary structure, homodimer. Interacts (via its cytoplasmic domain) with GIPC (via its PDZ domain). Interacts (via its cytoplasmic domain) with NUDT16L1. Interacts with CDCP1 and SDCBP. Interacts with DNM2; this interaction is markedly enhanced at focal ahesion site upon induction of focal adhesions and stress-fiber formation. Shedding is enhanced by a number of factors such as heparanase, thrombin or EGF. Also by stress and wound healing. PMA-mediated shedding is inhibited by TIMP3. Post-translationally, O-glycosylated; contains both chondroitin sulfate and heparan sulfate. Ser-39, Ser-61 and Ser-63 can all be modified by either chondroitin sulfate or heparan sulfate, and the protein exists in forms that contain only chondroitin sulfate, only heparan sulfate and both chondroitin sulfate and heparan sulfate. In terms of tissue distribution, detected in fibroblasts (at protein level). Also expressed in epithelial cells.

The protein resides in the membrane. Its subcellular location is the secreted. Cell surface proteoglycan which regulates exosome biogenesis in concert with SDCBP and PDCD6IP. The polypeptide is Syndecan-4 (Homo sapiens (Human)).